Here is a 303-residue protein sequence, read N- to C-terminus: Cytidine deaminase (303 aa).

CMP/dCMP-type deaminase domains follow at residues 57–172 (TDKE…YLPD) and 196–303 (ITED…IQVS). 98 to 100 (NQE) contributes to the substrate binding site. Residue H111 coordinates Zn(2+). E113 (proton donor) is an active-site residue. Zn(2+) is bound by residues C138 and C141.

It belongs to the cytidine and deoxycytidylate deaminase family. In terms of assembly, homodimer. Requires Zn(2+) as cofactor.

It catalyses the reaction cytidine + H2O + H(+) = uridine + NH4(+). The enzyme catalyses 2'-deoxycytidine + H2O + H(+) = 2'-deoxyuridine + NH4(+). In terms of biological role, this enzyme scavenges exogenous and endogenous cytidine and 2'-deoxycytidine for UMP synthesis. The protein is Cytidine deaminase of Histophilus somni (strain 2336) (Haemophilus somnus).